A 624-amino-acid polypeptide reads, in one-letter code: Ferredoxin-fold anticodon-binding domain-containing protein 1 (624 aa).

The 94-residue stretch at 531–624 (LYPPCYVHDV…IQQHLYVIPR (94 aa)) folds into the FDX-ACB domain.

The sequence is that of Ferredoxin-fold anticodon-binding domain-containing protein 1 (FDXACB1) from Homo sapiens (Human).